We begin with the raw amino-acid sequence, 334 residues long: Cathepsin L2 (334 aa).

Residues 1–17 (MNLSLVLAAFCLGIASA) form the signal peptide. The propeptide at 18 to 113 (VPKFDQNLDT…KVFREPLFLD (96 aa)) is activation peptide. 2 disulfides stabilise this stretch: Cys135–Cys178 and Cys169–Cys211. Cys138 is an active-site residue. N-linked (GlcNAc...) asparagine glycosylation is present at Asn221. A disulfide bridge links Cys270 with Cys323. The active site involves His277. The N-linked (GlcNAc...) asparagine glycan is linked to Asn292. Residue Asn301 is part of the active site.

This sequence belongs to the peptidase C1 family. In terms of tissue distribution, predominantly expressed in the thymus and testis. Also expressed in corneal epithelium, and to a lesser extent in conjunctival epithelium and skin.

Its subcellular location is the lysosome. It carries out the reaction The recombinant enzyme hydrolyzes proteins (serum albumin, collagen) and synthetic substrates (Z-Phe-Arg-NHMec &gt; Z-Leu-Arg-NHMec &gt; Z-Val-Arg-NHMec).. Inhibited by CST6. In terms of biological role, cysteine protease. May have an important role in corneal physiology. This is Cathepsin L2 (CTSV) from Homo sapiens (Human).